The following is a 315-amino-acid chain: Probable cell division protein WhiA (315 aa).

Residues Ser277 to Gln311 constitute a DNA-binding region (H-T-H motif).

It belongs to the WhiA family.

Involved in cell division and chromosome segregation. This Lacticaseibacillus casei (strain BL23) (Lactobacillus casei) protein is Probable cell division protein WhiA.